The chain runs to 457 residues: Cysteine--tRNA ligase (457 aa).

Cys31 is a Zn(2+) binding site. A 'HIGH' region motif is present at residues 33–43 (PTVYNYAHIGN). 3 residues coordinate Zn(2+): Cys211, His236, and Glu240. The short motif at 269–273 (KMSKS) is the 'KMSKS' region element. An ATP-binding site is contributed by Lys272.

The protein belongs to the class-I aminoacyl-tRNA synthetase family. As to quaternary structure, monomer. It depends on Zn(2+) as a cofactor.

The protein resides in the cytoplasm. The catalysed reaction is tRNA(Cys) + L-cysteine + ATP = L-cysteinyl-tRNA(Cys) + AMP + diphosphate. The polypeptide is Cysteine--tRNA ligase (Xanthomonas campestris pv. campestris (strain ATCC 33913 / DSM 3586 / NCPPB 528 / LMG 568 / P 25)).